The following is a 105-amino-acid chain: Large ribosomal subunit protein bL21 (105 aa).

It belongs to the bacterial ribosomal protein bL21 family. Part of the 50S ribosomal subunit. Contacts protein L20.

Its function is as follows. This protein binds to 23S rRNA in the presence of protein L20. This chain is Large ribosomal subunit protein bL21, found in Rickettsia bellii (strain OSU 85-389).